The sequence spans 336 residues: Ferredoxin--NADP reductase (336 aa).

7 residues coordinate FAD: Glu34, Gln42, Tyr47, Val87, Phe121, Asp286, and Ser326.

It belongs to the ferredoxin--NADP reductase type 2 family. Homodimer. Requires FAD as cofactor.

The catalysed reaction is 2 reduced [2Fe-2S]-[ferredoxin] + NADP(+) + H(+) = 2 oxidized [2Fe-2S]-[ferredoxin] + NADPH. The chain is Ferredoxin--NADP reductase from Leuconostoc mesenteroides subsp. mesenteroides (strain ATCC 8293 / DSM 20343 / BCRC 11652 / CCM 1803 / JCM 6124 / NCDO 523 / NBRC 100496 / NCIMB 8023 / NCTC 12954 / NRRL B-1118 / 37Y).